The chain runs to 320 residues: Aminoacyl tRNA synthase complex-interacting multifunctional protein 2 (320 aa).

Ser-36 carries the post-translational modification Phosphoserine. The interaction with PRKN stretch occupies residues Thr-82–Pro-162. Residues Pro-162 to His-225 are interaction with TP53. The GST C-terminal domain occupies Leu-220–Gln-317.

Part of the multisynthetase complex (MSC), a multisubunit complex that groups tRNA ligases for Arg (RARS1), Asp (DARS1), Gln (QARS1), Ile (IARS1), Leu (LARS1), Lys (KARS1), Met (MARS1) the bifunctional ligase for Glu and Pro (EPRS1) and the auxiliary subunits AIMP1/p43, AIMP2/p38 and EEF1E1/p18. Interacts (via N-terminus) with KARS1. Interacts with EPRS1. Forms a linear complex that contains MARS1, EEF1E1, EPRS1 and AIMP2 that is at the core of the multisubunit complex. Binds FUBP1 (via C-terminus). Interacts in both its unphosphorylated and phosphorylated forms with p53/TP53 (via N-terminus) in the nucleus following UV irradiation. Interacts (via N-terminus) with PRKN/parkin (via first RING-type domain). Interacts with TARS3. Post-translationally, phosphorylated on serine residues in response to UV irradiation. In terms of processing, ubiquitinated by PRKN, leading to its degradation by the proteasome.

The protein localises to the cytoplasm. It localises to the cytosol. It is found in the nucleus. Required for assembly and stability of the aminoacyl-tRNA synthase complex. Mediates ubiquitination and degradation of FUBP1, a transcriptional activator of MYC, leading to MYC down-regulation which is required for aveolar type II cell differentiation. Blocks MDM2-mediated ubiquitination and degradation of p53/TP53. Functions as a proapoptotic factor. In Mus musculus (Mouse), this protein is Aminoacyl tRNA synthase complex-interacting multifunctional protein 2 (Aimp2).